Consider the following 68-residue polypeptide: Alpha-conotoxin-like Lp1.2 (68 aa).

The N-terminal stretch at 1-21 (MGMRMMFTVFLLVVLATTVVS) is a signal peptide. Residues 22–48 (FTSDRAFDGRNAAASDKASDLISLAVR) constitute a propeptide that is removed on maturation. 2 disulfides stabilise this stretch: cysteine 50–cysteine 56 and cysteine 51–cysteine 64. The segment at 52–54 (SHP) is ser-Xaa-Pro motif, crucial for potent interaction with nAChR. Residue cysteine 64 is modified to Cysteine amide. The propeptide occupies 65–68 (GGKR).

It belongs to the conotoxin A superfamily. In terms of tissue distribution, expressed by the venom duct.

The protein resides in the secreted. In terms of biological role, alpha-conotoxins act on postsynaptic membranes, they bind to the nicotinic acetylcholine receptors (nAChR) and thus inhibit them. The protein is Alpha-conotoxin-like Lp1.2 of Conus leopardus (Leopard cone).